We begin with the raw amino-acid sequence, 345 residues long: DNA-directed RNA polymerases I and III subunit rpac1 (345 aa).

The span at 1–11 (MVNKSTTNGVS) shows a compositional bias: polar residues. Residues 1–20 (MVNKSTTNGVSDPNLENKRT) form a disordered region.

This sequence belongs to the archaeal Rpo3/eukaryotic RPB3 RNA polymerase subunit family. As to quaternary structure, component of the RNA polymerase I (Pol I) and RNA polymerase III (Pol III) complexes consisting of at least 13 and 17 subunits, respectively. Interacts with RPAC19/RPAC2.

The protein resides in the nucleus. DNA-dependent RNA polymerase catalyzes the transcription of DNA into RNA using the four ribonucleoside triphosphates as substrates. Common component of RNA polymerases I and III which synthesize ribosomal RNA precursors and small RNAs, such as 5S rRNA and tRNAs, respectively. RPAC1 is part of the Pol core element with the central large cleft and probably a clamp element that moves to open and close the cleft. In Dictyostelium discoideum (Social amoeba), this protein is DNA-directed RNA polymerases I and III subunit rpac1 (polr1c).